The chain runs to 347 residues: Protein YIPF1 homolog (347 aa).

A disordered region spans residues Met1–Asn115. At Met1 to Asp166 the chain is on the cytoplasmic side. The span at Asn34 to Thr47 shows a compositional bias: polar residues. Composition is skewed to low complexity over residues Gln48–Gln67 and Asn76–Asn104. Positions Lys105–Asn115 are enriched in polar residues. A helical membrane pass occupies residues Leu167–Leu187. Topologically, residues Asn188–Val207 are lumenal. Residues Tyr208 to Phe228 traverse the membrane as a helical segment. Over Lys229–Asn232 the chain is Cytoplasmic. A helical transmembrane segment spans residues Leu233 to Pro253. Residues Ala254–Ser255 are Lumenal-facing. Residues Ile256 to Val276 traverse the membrane as a helical segment. Residues Ser277–Arg296 are Cytoplasmic-facing. The helical transmembrane segment at Gly297–Leu317 threads the bilayer. At Tyr318–Leu347 the chain is on the lumenal side. 3 N-linked (GlcNAc...) asparagine glycosylation sites follow: Asn322, Asn326, and Asn342.

It belongs to the YIP1 family.

It localises to the golgi apparatus. Its subcellular location is the cis-Golgi network membrane. It is found in the trans-Golgi network membrane. The protein localises to the late endosome membrane. The protein is Protein YIPF1 homolog (yipf1) of Dictyostelium discoideum (Social amoeba).